We begin with the raw amino-acid sequence, 290 residues long: Ribosomal RNA small subunit methyltransferase A (290 aa).

The S-adenosyl-L-methionine site is built by asparagine 27, leucine 29, glycine 54, glutamate 75, aspartate 100, and asparagine 125.

This sequence belongs to the class I-like SAM-binding methyltransferase superfamily. rRNA adenine N(6)-methyltransferase family. RsmA subfamily.

It localises to the cytoplasm. The catalysed reaction is adenosine(1518)/adenosine(1519) in 16S rRNA + 4 S-adenosyl-L-methionine = N(6)-dimethyladenosine(1518)/N(6)-dimethyladenosine(1519) in 16S rRNA + 4 S-adenosyl-L-homocysteine + 4 H(+). Specifically dimethylates two adjacent adenosines (A1518 and A1519) in the loop of a conserved hairpin near the 3'-end of 16S rRNA in the 30S particle. May play a critical role in biogenesis of 30S subunits. The protein is Ribosomal RNA small subunit methyltransferase A of Streptococcus pneumoniae (strain 70585).